Reading from the N-terminus, the 240-residue chain is Uridylate kinase (240 aa).

Residue 12–15 (KLSG) participates in ATP binding. An involved in allosteric activation by GTP region spans residues 20–25 (GEQGNG). Gly54 contacts UMP. ATP contacts are provided by Gly55 and Arg59. UMP is bound by residues Asp74 and 135-142 (TGNPYFST). 3 residues coordinate ATP: Asn163, Tyr169, and Asp172.

It belongs to the UMP kinase family. As to quaternary structure, homohexamer.

It is found in the cytoplasm. It carries out the reaction UMP + ATP = UDP + ADP. The protein operates within pyrimidine metabolism; CTP biosynthesis via de novo pathway; UDP from UMP (UMPK route): step 1/1. Its activity is regulated as follows. Allosterically activated by GTP. Inhibited by UTP. Catalyzes the reversible phosphorylation of UMP to UDP. This is Uridylate kinase from Bacillus velezensis (strain DSM 23117 / BGSC 10A6 / LMG 26770 / FZB42) (Bacillus amyloliquefaciens subsp. plantarum).